The sequence spans 529 residues: MFPLTEENKHVAQLLLNTGTCPRCIFRFCGVDFHAPYKLPYKELLNELQKFLETEKDELILEVMNPPPKKIRLQELEDSIDNLSQNGEGRISVSHVGSTASKNSNLNVCNVCLGILQEFCEKDFIKKVCQKVEASGFEFTSLVFSVSFPPQLSVREHAAWLLVKQEMGKQSLSLGRDDIVQLKEAYKWITHPLFSEELGVPIDGKSLFEVSVVFAHPETVEDCHFLAAICPDCFKPAKNKQSVFTRMAVMKALNKIKEEDFLKQFPCPPNSPKAVCAVLEIECAHGAVFVAGRYNKYSRNLPQTPWIIDGERKLESSVEELISDHLLAVFKAESFNFSSSGREDVDVRTLGNGRPFAIELVNPHRVHFTSQEIKELQQKINNSSNKIQVRDLQLVTREAIGHMKEGEEEKTKTYSALIWTNKAIQKKDIEFLNDIKDLKIDQKTPLRVLHRRPLAVRARVIHFMETQYVDEHHFRLHLKTQAGTYIKEFVHGDFGRTKPNIGSLMNVTADILELDVESVDVDWPPALDD.

The Zn(2+) site is built by cysteine 21 and cysteine 24. The stretch at 42–89 (KELLNELQKFLETEKDELILEVMNPPPKKIRLQELEDSIDNLSQNGEG) forms a coiled coil. Residues serine 79 and serine 84 each carry the phosphoserine modification. The Zn(2+) site is built by cysteine 109 and cysteine 112. Positions 304–317 (TPWIIDGERKLESS) are RNA binding forefinger loop. Aspartate 344 (nucleophile) is an active-site residue. An RNA binding thumb loop region spans residues 442-457 (QKTPLRVLHRRPLAVR).

Belongs to the pseudouridine synthase Pus10 family. As to quaternary structure, interacts with components of the microprocessor complex DROSHA and DGCR8. Proteolytically cleaved during TRAIL-induced cell death. Cleaved, in vitro, either by caspase-3 (CASP3) or caspase-8 (CASP8).

The protein localises to the nucleus. It localises to the cytoplasm. It is found in the mitochondrion. The catalysed reaction is uridine(55) in tRNA = pseudouridine(55) in tRNA. It carries out the reaction uridine(54) in tRNA = pseudouridine(54) in tRNA. Functionally, protein with different functions depending on its subcellular location: involved in miRNA processing in the nucleus and acts as a tRNA pseudouridylate synthase in the cytoplasm. In the cytoplasm, acts as a pseudouridylate synthase by catalyzing synthesis of pseudouridine(54) and pseudouridine(55) from uracil-54 and uracil-55, respectively, in the psi GC loop of a subset of tRNAs. tRNA pseudouridylate synthase activity is enhanced by the presence of 1-methyladenosine at position 53-61 of tRNAs. Does not show tRNA pseudouridylate synthase activity in the nucleus. In the nucleus, promotes primary microRNAs (pri-miRNAs) processing independently of its RNA pseudouridylate synthase activity. Binds pri-miRNAs. Modulator of TRAIL/TNFSF10-induced cell death via activation of procaspase-8 and BID cleavage. Required for the progression of the apoptotic signal through intrinsic mitochondrial cell death. The sequence is that of tRNA pseudouridine synthase Pus10 from Homo sapiens (Human).